Here is a 154-residue protein sequence, read N- to C-terminus: Insulin-like growth factor 1 (154 aa).

The b stretch occupies residues 50–78; sequence GPETLCGAELVDALQFVCGDRGFYFNKPT. Cystine bridges form between C55-C97, C67-C110, and C96-C101. The interval 79 to 90 is c; sequence GYGSSSRRAPQT. The segment at 91–111 is a; it reads GIVDECCFRSCDLRRLEMYCA. Residues 112-119 are d; the sequence is PLKAAKSA. The propeptide at 120–154 is e peptide; sequence RSVRAQRHTDMPKAQKEVHLKNTSRGSAGNKNYRM. Positions 121–154 are disordered; that stretch reads SVRAQRHTDMPKAQKEVHLKNTSRGSAGNKNYRM. Basic and acidic residues predominate over residues 126-139; sequence RHTDMPKAQKEVHL. A compositionally biased stretch (polar residues) spans 140-154; it reads KNTSRGSAGNKNYRM.

Belongs to the insulin family. As to quaternary structure, forms a ternary complex with IGFR1 and ITGAV:ITGB3. Forms a ternary complex with IGFR1 and ITGA6:ITGB4. Forms a ternary complex with IGFBP3 and ALS.

Its subcellular location is the secreted. The insulin-like growth factors, isolated from plasma, are structurally and functionally related to insulin but have a much higher growth-promoting activity. May be a physiological regulator of [1-14C]-2-deoxy-D-glucose (2DG) transport and glycogen synthesis in osteoblasts. Stimulates glucose transport in bone-derived osteoblastic (PyMS) cells and is effective at much lower concentrations than insulin, not only regarding glycogen and DNA synthesis but also with regard to enhancing glucose uptake. May play a role in synapse maturation. Ca(2+)-dependent exocytosis of IGF1 is required for sensory perception of smell in the olfactory bulb. Acts as a ligand for IGF1R. Binds to the alpha subunit of IGF1R, leading to the activation of the intrinsic tyrosine kinase activity which autophosphorylates tyrosine residues in the beta subunit thus initiating a cascade of down-stream signaling events leading to activation of the PI3K-AKT/PKB and the Ras-MAPK pathways. Binds to integrins ITGAV:ITGB3 and ITGA6:ITGB4. Its binding to integrins and subsequent ternary complex formation with integrins and IGFR1 are essential for IGF1 signaling. Induces the phosphorylation and activation of IGFR1, MAPK3/ERK1, MAPK1/ERK2 and AKT1. As part of the MAPK/ERK signaling pathway, acts as a negative regulator of apoptosis in cardiomyocytes via promotion of STUB1/CHIP-mediated ubiquitination and degradation of ICER-type isoforms of CREM. The chain is Insulin-like growth factor 1 from Ovis aries (Sheep).